A 392-amino-acid chain; its full sequence is 4-hydroxy-3-methylbut-2-en-1-yl diphosphate synthase (flavodoxin) (392 aa).

[4Fe-4S] cluster contacts are provided by C280, C283, C315, and E322. A compositionally biased stretch (basic and acidic residues) spans 371-380 (TEKGSDHCSE). Residues 371–392 (TEKGSDHCSETTRSGSPVVTVN) are disordered. The segment covering 381–392 (TTRSGSPVVTVN) has biased composition (polar residues).

This sequence belongs to the IspG family. Requires [4Fe-4S] cluster as cofactor.

It carries out the reaction (2E)-4-hydroxy-3-methylbut-2-enyl diphosphate + oxidized [flavodoxin] + H2O + 2 H(+) = 2-C-methyl-D-erythritol 2,4-cyclic diphosphate + reduced [flavodoxin]. It functions in the pathway isoprenoid biosynthesis; isopentenyl diphosphate biosynthesis via DXP pathway; isopentenyl diphosphate from 1-deoxy-D-xylulose 5-phosphate: step 5/6. Functionally, converts 2C-methyl-D-erythritol 2,4-cyclodiphosphate (ME-2,4cPP) into 1-hydroxy-2-methyl-2-(E)-butenyl 4-diphosphate. The chain is 4-hydroxy-3-methylbut-2-en-1-yl diphosphate synthase (flavodoxin) from Mycobacterium leprae (strain Br4923).